A 264-amino-acid chain; its full sequence is MVDAHTHLDACGARDADTVRSLVERAAAAGVTAVVTVADDLESARWVTRAAEWDRRVYAAVALHPTRADALTDAARAELERLVAHPRVVAVGETGIDMYWPGRLDGCAEPHVQREAFAWHIDLAKRTGKPLMIHNRQADRDVLDVLRAEGAPDTVILHCFSSDAAMARTCVDAGWLLSLSGTVSFRTARELREAVPLMPVEQLLVETDAPYLTPHPHRGLANEPYCLPYTVRALAELVNRRPEEVALITTSNARRAYGLGWMRQ.

The a divalent metal cation site is built by histidine 5, histidine 7, glutamate 93, histidine 134, histidine 158, and aspartate 208.

It belongs to the metallo-dependent hydrolases superfamily. TatD-type hydrolase family. A divalent metal cation serves as cofactor.

This is an uncharacterized protein from Mycobacterium tuberculosis (strain ATCC 25618 / H37Rv).